We begin with the raw amino-acid sequence, 259 residues long: Ribosomal RNA small subunit methyltransferase A (259 aa).

Residues Asn-13, Leu-15, Gly-40, Glu-61, Asp-85, and Asn-103 each contribute to the S-adenosyl-L-methionine site.

This sequence belongs to the class I-like SAM-binding methyltransferase superfamily. rRNA adenine N(6)-methyltransferase family. RsmA subfamily.

It is found in the cytoplasm. It catalyses the reaction adenosine(1518)/adenosine(1519) in 16S rRNA + 4 S-adenosyl-L-methionine = N(6)-dimethyladenosine(1518)/N(6)-dimethyladenosine(1519) in 16S rRNA + 4 S-adenosyl-L-homocysteine + 4 H(+). In terms of biological role, specifically dimethylates two adjacent adenosines (A1518 and A1519) in the loop of a conserved hairpin near the 3'-end of 16S rRNA in the 30S particle. May play a critical role in biogenesis of 30S subunits. The polypeptide is Ribosomal RNA small subunit methyltransferase A (Neisseria gonorrhoeae (strain NCCP11945)).